The primary structure comprises 363 residues: Endopolygalacturonase A (363 aa).

The first 20 residues, 1–20, serve as a signal peptide directing secretion; sequence MQLLQSSVIAATVGAALVAA. Residues 21-28 constitute a propeptide that is removed on maturation; that stretch reads VPVELEAR. An intrachain disulfide couples Cys-31 to Cys-46. 6 PbH1 repeats span residues 158 to 187, 188 to 209, 210 to 230, 239 to 260, 268 to 290, and 302 to 347; these read SDNL…DVGS, STYI…AINS, GSHI…SIGS, VEDV…RIKT, VSNV…IVEQ, and TNGI…SITG. Asn-162 carries an N-linked (GlcNAc...) asparagine glycan. Residue Asp-202 is the Proton donor of the active site. A disulfide bridge connects residues Cys-204 and Cys-220. His-224 is a catalytic residue. 2 cysteine pairs are disulfide-bonded: Cys-330/Cys-335 and Cys-354/Cys-363.

Belongs to the glycosyl hydrolase 28 family.

It is found in the secreted. It catalyses the reaction (1,4-alpha-D-galacturonosyl)n+m + H2O = (1,4-alpha-D-galacturonosyl)n + (1,4-alpha-D-galacturonosyl)m.. Functionally, involved in maceration and soft-rotting of plant tissue. Hydrolyzes the 1,4-alpha glycosidic bonds of de-esterified pectate in the smooth region of the plant cell wall. This chain is Endopolygalacturonase A (pgaA), found in Aspergillus flavus (strain ATCC MYA-384 / AF70).